A 203-amino-acid polypeptide reads, in one-letter code: DNA-directed RNA polymerase subunit gamma (203 aa).

Cys-34, Cys-36, Cys-49, and Cys-52 together coordinate Zn(2+).

It belongs to the RNA polymerase beta' chain family. RpoC1 subfamily. As to quaternary structure, in cyanobacteria the RNAP catalytic core is composed of 2 alpha, 1 beta, 1 beta', 1 gamma and 1 omega subunit. When a sigma factor is associated with the core the holoenzyme is formed, which can initiate transcription. It depends on Zn(2+) as a cofactor.

It catalyses the reaction RNA(n) + a ribonucleoside 5'-triphosphate = RNA(n+1) + diphosphate. Functionally, DNA-dependent RNA polymerase catalyzes the transcription of DNA into RNA using the four ribonucleoside triphosphates as substrates. The chain is DNA-directed RNA polymerase subunit gamma (rpoC1) from Fischerella muscicola.